The following is a 213-amino-acid chain: rRNA N(6)-adenosine-methyltransferase Mettl5 (213 aa).

S-adenosyl-L-methionine-binding positions include glutamine 28, threonine 31, glycine 59, cysteine 62, and 108 to 109; that span reads DV.

This sequence belongs to the methyltransferase superfamily. PrmA family. As to quaternary structure, heterodimer; heterodimerizes with Trmt112. Enriched in the brain.

The protein localises to the cytoplasm. It catalyses the reaction adenosine in rRNA + S-adenosyl-L-methionine = N(6)-methyladenosine in rRNA + S-adenosyl-L-homocysteine + H(+). Catalytic subunit of a heterodimer with Trmt112, which specifically methylates the 6th position of adenine in 18S rRNA. The protein is rRNA N(6)-adenosine-methyltransferase Mettl5 of Drosophila melanogaster (Fruit fly).